The primary structure comprises 58 residues: Small ribosomal subunit protein bS21 (58 aa).

Residues 36-58 form a disordered region; it reads RHHETPVEKYKRKLQQRRRSRRR. Residues 45–58 show a composition bias toward basic residues; the sequence is YKRKLQQRRRSRRR.

The protein belongs to the bacterial ribosomal protein bS21 family.

The chain is Small ribosomal subunit protein bS21 from Prochlorococcus marinus (strain NATL1A).